The primary structure comprises 833 residues: Leucine--tRNA ligase (833 aa).

Positions 41 to 52 (PYPSGVGLHVGH) match the 'HIGH' region motif. Positions 610–614 (KMSKS) match the 'KMSKS' region motif. Residue Lys613 coordinates ATP.

Belongs to the class-I aminoacyl-tRNA synthetase family.

The protein resides in the cytoplasm. The enzyme catalyses tRNA(Leu) + L-leucine + ATP = L-leucyl-tRNA(Leu) + AMP + diphosphate. In Streptococcus pneumoniae serotype 2 (strain D39 / NCTC 7466), this protein is Leucine--tRNA ligase.